Reading from the N-terminus, the 96-residue chain is MNIRPLHDRVIVKRLEVESTSAGGIVLTGSAAEKSTRGEVLAVGNGRILENGTVRPLDVKVGDVVIFNEGYGVKKEKIDGQEVLILSEADLMAIVG.

It belongs to the GroES chaperonin family. Heptamer of 7 subunits arranged in a ring. Interacts with the chaperonin GroEL.

The protein resides in the cytoplasm. In terms of biological role, together with the chaperonin GroEL, plays an essential role in assisting protein folding. The GroEL-GroES system forms a nano-cage that allows encapsulation of the non-native substrate proteins and provides a physical environment optimized to promote and accelerate protein folding. GroES binds to the apical surface of the GroEL ring, thereby capping the opening of the GroEL channel. The sequence is that of Co-chaperonin GroES from Shewanella oneidensis (strain ATCC 700550 / JCM 31522 / CIP 106686 / LMG 19005 / NCIMB 14063 / MR-1).